A 1444-amino-acid chain; its full sequence is Cleavage and polyadenylation specificity factor subunit 1 (1444 aa).

4 disordered regions span residues 406 to 439 (PPASTAREAADKEEPPSKKKRVDATTGWSGSKSV), 549 to 571 (EETLKGEGTEPEPGAPEAEDDGR), 716 to 778 (GGVR…PAPF), and 902 to 924 (FREKKPKPSKKKAEGGSTEEGTG). Positions 413–422 (EAADKEEPPS) are enriched in basic and acidic residues. Ser757 and Ser767 each carry phosphoserine. The segment covering 759 to 776 (SKEEARRSSQPPADRDPA) has biased composition (basic and acidic residues). The Nuclear localization signal motif lies at 894-909 (KKVPHNINFREKKPKP).

The protein belongs to the CPSF1 family. Component of the cleavage and polyadenylation specificity factor (CPSF) complex, composed of CPSF1, CPSF2, CPSF3, CPSF4 and FIP1L1. Found in a complex with CPSF1, FIP1L1 and PAPOLA. Interacts with FIP1L1, TENT2/GLD2 and SRRM1. Interacts with TUT1; the interaction is direct and mediates the recruitment of the CPSF complex on the 3'UTR of selected pre-mRNAs. The N-terminus is blocked.

The protein localises to the nucleus. It is found in the nucleoplasm. In terms of biological role, component of the cleavage and polyadenylation specificity factor (CPSF) complex that plays a key role in pre-mRNA 3'-end formation, recognizing the AAUAAA signal sequence and interacting with poly(A) polymerase and other factors to bring about cleavage and poly(A) addition. This subunit is involved in the RNA recognition step of the polyadenylation reaction. May play a role in eye morphogenesis and the development of retinal ganglion cell projections to the midbrain. This is Cleavage and polyadenylation specificity factor subunit 1 (CPSF1) from Bos taurus (Bovine).